Reading from the N-terminus, the 439-residue chain is Beta-1,3-galactosyl-O-glycosyl-glycoprotein beta-1,6-N-acetylglucosaminyltransferase (439 aa).

Topologically, residues 1 to 11 (MVGWKKKKLCR) are cytoplasmic. Residues 12–29 (GHHLWVLGCYMLLAVVSL) traverse the membrane as a helical; Signal-anchor for type II membrane protein segment. Topologically, residues 30–439 (RLSLRFKCDV…RHKAIYGTEL (410 aa)) are lumenal. Residues asparagine 71 and asparagine 107 are each glycosylated (N-linked (GlcNAc...) asparagine; by host). Cystine bridges form between cysteine 72–cysteine 229, cysteine 163–cysteine 383, cysteine 184–cysteine 211, and cysteine 392–cysteine 424.

The protein belongs to the glycosyltransferase 14 family.

The protein localises to the host Golgi apparatus membrane. It catalyses the reaction a 3-O-[beta-D-galactosyl-(1-&gt;3)-N-acetyl-alpha-D-galactosaminyl]-L-seryl-[protein] + UDP-N-acetyl-alpha-D-glucosamine = 3-O-{beta-D-galactosyl-(1-&gt;3)-[N-acetyl-beta-D-glucosaminyl-(1-&gt;6)]-N-acetyl-alpha-D-galactosaminyl}-L-seryl-[protein] + UDP + H(+). The catalysed reaction is a 3-O-[beta-D-galactosyl-(1-&gt;3)-N-acetyl-alpha-D-galactosaminyl]-L-threonyl-[protein] + UDP-N-acetyl-alpha-D-glucosamine = a 3-O-{beta-D-galactosyl-(1-&gt;3)-[N-acetyl-beta-D-glucosaminyl-(1-&gt;6)]-N-acetyl-alpha-D-galactosaminyl}-L-threonyl-[protein] + UDP + H(+). It carries out the reaction a beta-D-Gal-(1-&gt;4)-beta-D-GlcNAc-(1-&gt;3)-beta-D-Gal-(1-&gt;4)-beta-D-GlcNAc derivative + UDP-N-acetyl-alpha-D-glucosamine = a beta-D-Gal-(1-&gt;4)-beta-D-GlcNAc-(1-&gt;3)-[beta-D-GlcNAc-(1-&gt;6)]-beta-D-Gal-(1-&gt;4)-N-acetyl-beta-D-glucosaminyl derivative + UDP + H(+). The enzyme catalyses 3-O-[N-acetyl-beta-D-glucosaminyl-(1-&gt;3)-N-acetyl-alpha-D-galactosaminyl]-L-seryl-[protein] + UDP-N-acetyl-alpha-D-glucosamine = 3-O-[N-acetyl-beta-D-glucosaminyl-(1-&gt;3)-[N-acetyl-beta-D-glucosaminyl-(1-&gt;6)]-N-acetyl-alpha-D-galactosaminyl]-L-seryl-[protein] + UDP + H(+). It catalyses the reaction a 3-O-[N-acetyl-beta-D-glucosaminyl-(1-&gt;3)-N-acetyl-alpha-D-galactosaminyl]-L-threonyl-[protein] + UDP-N-acetyl-alpha-D-glucosamine = 3-O-[N-acetyl-beta-D-glucosaminyl-(1-&gt;3)-[N-acetyl-beta-D-glucosaminyl-(1-&gt;6)]-N-acetyl-alpha-D-galactosaminyl]-L-threonyl-[protein] + UDP + H(+). It functions in the pathway protein modification; protein glycosylation. Its function is as follows. Non-essential glycosyltransferase that can synthesize all known mucin beta 6 N-acetylglucosaminides. Mediates core 2 and core 4 O-glycan branching, 2 important steps in mucin-type biosynthesis. Has also I-branching enzyme activity by converting linear into branched poly-N-acetyllactosaminoglycans. Contributes to the post-translational modifications of structural proteins. This chain is Beta-1,3-galactosyl-O-glycosyl-glycoprotein beta-1,6-N-acetylglucosaminyltransferase (Bo17), found in Bovine herpesvirus 4 (BoHV-4).